Reading from the N-terminus, the 881-residue chain is Ribonucleoside-diphosphate reductase large subunit (881 aa).

The ATP-cone domain occupies 69–160; it reads TIYLDHNGSI…MTNLHDNTSD (92 aa). Residues T271, 286 to 287, G315, 493 to 497, and 675 to 679 each bind substrate; these read SC, NLCCE, and PTAST. An intrachain disulfide couples C287 to C510. The active-site Proton acceptor is N493. C495 serves as the catalytic Cysteine radical intermediate. E497 serves as the catalytic Proton acceptor.

The protein belongs to the ribonucleoside diphosphate reductase large chain family. As to quaternary structure, heterotetramer composed of a homodimer of the large subunit (R1) and a homodimer of the small subunit (R2). Larger multisubunit protein complex are also active, composed of (R1)n(R2)n.

It catalyses the reaction a 2'-deoxyribonucleoside 5'-diphosphate + [thioredoxin]-disulfide + H2O = a ribonucleoside 5'-diphosphate + [thioredoxin]-dithiol. Its activity is regulated as follows. Under complex allosteric control mediated by deoxynucleoside triphosphates and ATP binding. The type of nucleotide bound at the specificity site determines substrate preference. It seems probable that ATP makes the enzyme reduce CDP and UDP, dGTP favors ADP reduction and dTTP favors GDP reduction. Ribonucleoside-diphosphate reductase holoenzyme provides the precursors necessary for viral DNA synthesis. Allows virus growth in non-dividing cells. Catalyzes the biosynthesis of deoxyribonucleotides from the corresponding ribonucleotides. In Acanthamoeba polyphaga mimivirus (APMV), this protein is Ribonucleoside-diphosphate reductase large subunit (RNR1).